The chain runs to 290 residues: MSRLGNRAADWADDEEFDDPSALPAQQVTTNKDGTKTVVSYRFNDEGKKVKVTRRIKTTVVREHVNPQVAERRSWAKFGLEKGHAAGPSFDTTSVGENIIFRPSVNWRAQAAEAEKAGPEKGSIKDQLKDKKVKCRICSGEHFTARCPFKDTMAPVDETAAAGAEPGAEDVPAAGGLGAGTSSYVPPHLRKGAAAGGERMAGKYEKDDLATLRVTNVSELAEESELRDLFERFGRVTRVFLARDRETQRAKGFAFISFADRTDAARACEKMDGFGYRHLILRVEFAKRAT.

The segment at 1–34 (MSRLGNRAADWADDEEFDDPSALPAQQVTTNKDG) is disordered. The RRM domain occupies 210–288 (ATLRVTNVSE…LILRVEFAKR (79 aa)).

Belongs to the eIF-3 subunit G family. In terms of assembly, component of the eukaryotic translation initiation factor 3 (eIF-3) complex.

The protein localises to the cytoplasm. RNA-binding component of the eukaryotic translation initiation factor 3 (eIF-3) complex, which is involved in protein synthesis of a specialized repertoire of mRNAs and, together with other initiation factors, stimulates binding of mRNA and methionyl-tRNAi to the 40S ribosome. The eIF-3 complex specifically targets and initiates translation of a subset of mRNAs involved in cell proliferation. This subunit can bind 18S rRNA. This is Eukaryotic translation initiation factor 3 subunit G from Neosartorya fischeri (strain ATCC 1020 / DSM 3700 / CBS 544.65 / FGSC A1164 / JCM 1740 / NRRL 181 / WB 181) (Aspergillus fischerianus).